The chain runs to 127 residues: Glycine cleavage system H protein 1 (127 aa).

The region spanning 20–101 (SVTVGITPYA…LGAGWFFRFI (82 aa)) is the Lipoyl-binding domain. Residue Lys-60 is modified to N6-lipoyllysine.

Belongs to the GcvH family. As to quaternary structure, the glycine cleavage system is composed of four proteins: P, T, L and H. It depends on (R)-lipoate as a cofactor.

The glycine cleavage system catalyzes the degradation of glycine. The H protein shuttles the methylamine group of glycine from the P protein to the T protein. This Pseudomonas syringae pv. tomato (strain ATCC BAA-871 / DC3000) protein is Glycine cleavage system H protein 1.